A 68-amino-acid polypeptide reads, in one-letter code: Large ribosomal subunit protein uL29 (68 aa).

Belongs to the universal ribosomal protein uL29 family.

The chain is Large ribosomal subunit protein uL29 from Streptococcus thermophilus (strain ATCC BAA-250 / LMG 18311).